The sequence spans 345 residues: Metal-dependent phosphohydrolase cns2 (345 aa).

The region spanning 70–171 (RLEHSVGAFI…QLCADRLDYA (102 aa)) is the HD domain.

Interacts with cns1.

The protein localises to the lipid droplet. It functions in the pathway secondary metabolite biosynthesis. Metal-dependent phosphohydrolase; part of the gene cluster that mediates the biosynthesis of cordycepin (COR) and pentostatin (PTN), two adenosine analogs with related bioactivity profiles as both mimic adenosine and can inhibit some of the processes that are adenosine dependent. Within the pathway, cns2 catalyzes dephosphorylation of 3'-AMP to produce 2'-carbonyl-3'-deoxyadenosine (2'-C-3'-dA). The first step of cordycepin biosynthesis involves hydroxyl phosphorylation of the 3'-OH position on adenosine to produce adenosine-3'-monophosphate (3'-AMP), catalyzed by kinase activity of cns3. Next, 3'-AMP is dephosphorylated to 2'-carbonyl-3'-deoxyadenosine by cns2, which is finally converted to cordycepin (3'-deoxyadenosine) by the oxidoreductase cns1. This is Metal-dependent phosphohydrolase cns2 from Cordyceps militaris (strain CM01) (Caterpillar fungus).